Here is a 243-residue protein sequence, read N- to C-terminus: UTP--glucose-1-phosphate uridylyltransferase AglF (243 aa).

Belongs to the UDPGP type 2 family.

It carries out the reaction alpha-D-glucose 1-phosphate + UTP + H(+) = UDP-alpha-D-glucose + diphosphate. The protein operates within cell surface structure biogenesis; S-layer biogenesis. Its function is as follows. Involved in the assembly of a N-linked pentasaccharide that decorates the S-layer glycoprotein and flagellins. Involved in the biosynthesis of the hexuronic acid found at position 3 of the pentasaccharide. The polypeptide is UTP--glucose-1-phosphate uridylyltransferase AglF (aglF) (Haloferax volcanii (strain ATCC 29605 / DSM 3757 / JCM 8879 / NBRC 14742 / NCIMB 2012 / VKM B-1768 / DS2) (Halobacterium volcanii)).